A 483-amino-acid chain; its full sequence is Regulatory protein ViaA (483 aa).

The protein belongs to the ViaA family. As to quaternary structure, homodimer. Interacts with RavA.

The protein localises to the cytoplasm. Functionally, component of the RavA-ViaA chaperone complex, which may act on the membrane to optimize the function of some of the respiratory chains. ViaA stimulates the ATPase activity of RavA. The chain is Regulatory protein ViaA from Salmonella schwarzengrund (strain CVM19633).